A 116-amino-acid polypeptide reads, in one-letter code: Beta-2-microglobulin (116 aa).

An N-terminal signal peptide occupies residues 1-19; it reads MKFLLSFVVLAVFSASAFA. Residues 24 to 111 enclose the Ig-like C1-type domain; that stretch reads PKIQVYSRNP…RHLKETKNIS (88 aa). A disulfide bridge links cysteine 44 with cysteine 99.

Belongs to the beta-2-microglobulin family. Heterodimer of an alpha chain and a beta chain. Beta-2-microglobulin is the beta-chain of major histocompatibility complex class I molecules.

Its subcellular location is the secreted. Its function is as follows. Component of the class I major histocompatibility complex (MHC). Involved in the presentation of peptide antigens to the immune system. This Ictalurus punctatus (Channel catfish) protein is Beta-2-microglobulin (b2m).